The chain runs to 269 residues: 3'(2'),5'-bisphosphate nucleotidase CysQ (269 aa).

Mg(2+)-binding residues include Glu69, Asp89, Leu91, Asp92, and Asp216. A substrate-binding site is contributed by Glu69. Substrate is bound by residues 91–94 (LDGT) and Asp216.

The protein belongs to the inositol monophosphatase superfamily. CysQ family. Requires Mg(2+) as cofactor.

It localises to the cell inner membrane. The enzyme catalyses adenosine 3',5'-bisphosphate + H2O = AMP + phosphate. Functionally, converts adenosine-3',5'-bisphosphate (PAP) to AMP. The protein is 3'(2'),5'-bisphosphate nucleotidase CysQ of Aggregatibacter actinomycetemcomitans (Actinobacillus actinomycetemcomitans).